The sequence spans 188 residues: Holliday junction branch migration complex subunit RuvA (188 aa).

Residues 1–62 (MIVGVRGVLV…EDAQLLYGFL (62 aa)) are domain I. Positions 63 to 135 (ELGEKKLFER…LSGFDTELII (73 aa)) are domain II. Residues 135–139 (ISASE) form a flexible linker region. The tract at residues 140 to 188 (PKSLAVAQASEALESLGFKKDKISKALGSCSAVDTAILVKEALKLLQTI) is domain III.

This sequence belongs to the RuvA family. In terms of assembly, homotetramer. Forms an RuvA(8)-RuvB(12)-Holliday junction (HJ) complex. HJ DNA is sandwiched between 2 RuvA tetramers; dsDNA enters through RuvA and exits via RuvB. An RuvB hexamer assembles on each DNA strand where it exits the tetramer. Each RuvB hexamer is contacted by two RuvA subunits (via domain III) on 2 adjacent RuvB subunits; this complex drives branch migration. In the full resolvosome a probable DNA-RuvA(4)-RuvB(12)-RuvC(2) complex forms which resolves the HJ.

The protein localises to the cytoplasm. Functionally, the RuvA-RuvB-RuvC complex processes Holliday junction (HJ) DNA during genetic recombination and DNA repair, while the RuvA-RuvB complex plays an important role in the rescue of blocked DNA replication forks via replication fork reversal (RFR). RuvA specifically binds to HJ cruciform DNA, conferring on it an open structure. The RuvB hexamer acts as an ATP-dependent pump, pulling dsDNA into and through the RuvAB complex. HJ branch migration allows RuvC to scan DNA until it finds its consensus sequence, where it cleaves and resolves the cruciform DNA. The sequence is that of Holliday junction branch migration complex subunit RuvA from Sulfurimonas denitrificans (strain ATCC 33889 / DSM 1251) (Thiomicrospira denitrificans (strain ATCC 33889 / DSM 1251)).